Reading from the N-terminus, the 297-residue chain is 4-hydroxy-tetrahydrodipicolinate synthase (297 aa).

T49 provides a ligand contact to pyruvate. Y137 (proton donor/acceptor) is an active-site residue. Residue K166 is the Schiff-base intermediate with substrate of the active site. Pyruvate is bound at residue I208.

Belongs to the DapA family. In terms of assembly, homotetramer; dimer of dimers.

It is found in the cytoplasm. The catalysed reaction is L-aspartate 4-semialdehyde + pyruvate = (2S,4S)-4-hydroxy-2,3,4,5-tetrahydrodipicolinate + H2O + H(+). Its pathway is amino-acid biosynthesis; L-lysine biosynthesis via DAP pathway; (S)-tetrahydrodipicolinate from L-aspartate: step 3/4. Catalyzes the condensation of (S)-aspartate-beta-semialdehyde [(S)-ASA] and pyruvate to 4-hydroxy-tetrahydrodipicolinate (HTPA). This Prosthecochloris aestuarii (strain DSM 271 / SK 413) protein is 4-hydroxy-tetrahydrodipicolinate synthase.